Reading from the N-terminus, the 103-residue chain is NADH-quinone oxidoreductase subunit K 1 (103 aa).

3 consecutive transmembrane segments (helical) span residues 7 to 27, 31 to 51, and 63 to 83; these read ISWF…GFLF, IITV…SFVT, and LFTF…LAII.

This sequence belongs to the complex I subunit 4L family. NDH-1 is composed of 14 different subunits. Subunits NuoA, H, J, K, L, M, N constitute the membrane sector of the complex.

It is found in the cell inner membrane. The enzyme catalyses a quinone + NADH + 5 H(+)(in) = a quinol + NAD(+) + 4 H(+)(out). NDH-1 shuttles electrons from NADH, via FMN and iron-sulfur (Fe-S) centers, to quinones in the respiratory chain. The immediate electron acceptor for the enzyme in this species is believed to be ubiquinone. Couples the redox reaction to proton translocation (for every two electrons transferred, four hydrogen ions are translocated across the cytoplasmic membrane), and thus conserves the redox energy in a proton gradient. This chain is NADH-quinone oxidoreductase subunit K 1, found in Solibacter usitatus (strain Ellin6076).